Here is a 314-residue protein sequence, read N- to C-terminus: Aromatic prenyltransferase (314 aa).

This sequence belongs to the aromatic prenyltransferase family.

In terms of biological role, prenyltransferase that attaches isoprenoid moieties to carbon atoms of aromatic substrates in an enzyme-catalyzed Friedel-Crafts reaction. The polypeptide is Aromatic prenyltransferase (Arthroderma otae (strain ATCC MYA-4605 / CBS 113480) (Microsporum canis)).